The chain runs to 256 residues: Phosphoribosylaminoimidazole-succinocarboxamide synthase (256 aa).

Residues 234–256 are disordered; that stretch reads KPQKPAAAKKKAPVSKKTVKRTR. Over residues 240–256 the composition is skewed to basic residues; that stretch reads AAKKKAPVSKKTVKRTR.

This sequence belongs to the SAICAR synthetase family.

It catalyses the reaction 5-amino-1-(5-phospho-D-ribosyl)imidazole-4-carboxylate + L-aspartate + ATP = (2S)-2-[5-amino-1-(5-phospho-beta-D-ribosyl)imidazole-4-carboxamido]succinate + ADP + phosphate + 2 H(+). It participates in purine metabolism; IMP biosynthesis via de novo pathway; 5-amino-1-(5-phospho-D-ribosyl)imidazole-4-carboxamide from 5-amino-1-(5-phospho-D-ribosyl)imidazole-4-carboxylate: step 1/2. The polypeptide is Phosphoribosylaminoimidazole-succinocarboxamide synthase (Methanoregula boonei (strain DSM 21154 / JCM 14090 / 6A8)).